Consider the following 424-residue polypeptide: Phosphomethylpyrimidine synthase 2 (424 aa).

Residues N65, M94, Y123, H162, 184–186 (SRG), 225–228 (DGLR), and E264 each bind substrate. H268 contacts Zn(2+). Residue Y291 participates in substrate binding. H332 lines the Zn(2+) pocket. Residues C408, C411, and C415 each coordinate [4Fe-4S] cluster.

The protein belongs to the ThiC family. The cofactor is [4Fe-4S] cluster.

The enzyme catalyses 5-amino-1-(5-phospho-beta-D-ribosyl)imidazole + S-adenosyl-L-methionine = 4-amino-2-methyl-5-(phosphooxymethyl)pyrimidine + CO + 5'-deoxyadenosine + formate + L-methionine + 3 H(+). Its pathway is cofactor biosynthesis; thiamine diphosphate biosynthesis. Catalyzes the synthesis of the hydroxymethylpyrimidine phosphate (HMP-P) moiety of thiamine from aminoimidazole ribotide (AIR) in a radical S-adenosyl-L-methionine (SAM)-dependent reaction. The chain is Phosphomethylpyrimidine synthase 2 from Methanothermobacter thermautotrophicus (strain ATCC 29096 / DSM 1053 / JCM 10044 / NBRC 100330 / Delta H) (Methanobacterium thermoautotrophicum).